A 320-amino-acid polypeptide reads, in one-letter code: Rhomboid-like protein 17, chloroplastic (320 aa).

The transit peptide at Met-1–Arg-87 directs the protein to the chloroplast. Helical transmembrane passes span Trp-116–Thr-136, Leu-160–Ile-180, Leu-199–Ala-219, Met-247–Leu-267, and Ile-295–Ile-315.

The protein belongs to the peptidase S54 family.

It is found in the plastid. Its subcellular location is the chloroplast membrane. Its function is as follows. Probable rhomboid-type serine protease that catalyzes intramembrane proteolysis. The sequence is that of Rhomboid-like protein 17, chloroplastic from Arabidopsis thaliana (Mouse-ear cress).